Here is a 508-residue protein sequence, read N- to C-terminus: Immunoglobulin G-binding protein A (508 aa).

Positions 1–36 (MKKKNIYSIRKLGVGIASVTLGTLLISGGVTPAANA) are cleaved as a signal peptide. The YSIRK-G/S signaling motif signature appears at 7–18 (YSIRKLGVGIAS). The Immunoglobulin-binding region E repeat unit spans residues 37 to 92 (AQHDEAQQNAFYQVLNMPNLNADQRNGFIQSLKDDPSQSANVLGEAQKLNDSQAPK). An Immunoglobulin-binding region D repeat occupies 93 to 153 (ADAQQNKFNK…KKLNESQAPK (61 aa)). One copy of the Immunoglobulin-binding region A repeat lies at 154–211 (ADNNFNKEQQNAFYEILNMPNLNEEQRNGFIQSLKDDPSQSANLLAEAKKLNESQAPK). Residues 212 to 269 (ADNKFNKEQQNAFYEILHLPNLNEEQRNGFIQSLKDDPSQSANLLAEAKKLNDAQAPK) form an Immunoglobulin-binding region B repeat. One copy of the Immunoglobulin-binding region C repeat lies at 270 to 327 (ADNKFNKEQQNAFYEILHLPNLTEEQRNGFIQSLKDDPSVSKEILAEAKKLNDAQAPK). Residues 318–412 (KKLNDAQAPK…GNKPGKEDGN (95 aa)) are compositionally biased toward basic and acidic residues. Disordered regions lie at residues 318 to 424 (KKLN…DTVN) and 459 to 479 (KKQP…ETGE). 12 consecutive repeat copies span residues 333–340 (KPGKEDGN), 341–348 (KPGKEDGN), 349–356 (KPGKEDNK), 357–364 (KPGKEDGN), 365–372 (KPGKEDNK), 373–380 (KPGKEDGN), 381–388 (KPGKEDGN), 389–396 (KPGKEDGN), 397–405 (KPGKEDGNK), 406–413 (PGKEDGNG), 414–421 (VHVVKPGD), and 422–429 (TVNDIAKA). Positions 333 to 408 (KPGKEDGNKP…GKEDGNKPGK (76 aa)) are 12 X 8 AA approximate tandem repeats. Positions 413–457 (GVHVVKPGDTVNDIAKANGTTADKIAADNKLADKNMIKPGQELVV) constitute a LysM domain. An LPXTG sorting signal motif is present at residues 474–478 (LPETG). Thr-477 bears the Pentaglycyl murein peptidoglycan amidated threonine mark. Residues 478 to 508 (GEENPFIGTTVFGGLSLALGAALLAGRRREL) constitute a propeptide, removed by sortase.

It belongs to the immunoglobulin-binding protein SpA family. Interacts with host TNFRSF1A; this interaction leads to the stimulation of both surface expression and shedding of TNFRSF1A.

It localises to the secreted. Its subcellular location is the cell wall. Its function is as follows. Plays a role in the inhibition of the host innate and adaptive immune responses. Possesses five immunoglobulin-binding domains that capture both the fragment crystallizable region (Fc region) and the Fab region (part of Ig that identifies antigen) of immunoglobulins. In turn, Staphylococcus aureus is protected from phagocytic killing via inhibition of Ig Fc region. In addition, the host elicited B-cell response is prevented due to a decrease of antibody-secreting cell proliferation that enter the bone marrow, thereby decreasing long-term antibody production. Inhibits osteogenesis by preventing osteoblast proliferation and expression of alkaline phosphatase, type I collagen, osteopontin and osteocalcin. Acts directly as a pro-inflammatory factor in the lung through its ability to bind and activate tumor necrosis factor alpha receptor 1/TNFRSF1A. This chain is Immunoglobulin G-binding protein A (spa), found in Staphylococcus aureus.